Reading from the N-terminus, the 345-residue chain is Phosphoribosylformylglycinamidine cyclo-ligase (345 aa).

Belongs to the AIR synthase family.

It localises to the cytoplasm. The enzyme catalyses 2-formamido-N(1)-(5-O-phospho-beta-D-ribosyl)acetamidine + ATP = 5-amino-1-(5-phospho-beta-D-ribosyl)imidazole + ADP + phosphate + H(+). Its pathway is purine metabolism; IMP biosynthesis via de novo pathway; 5-amino-1-(5-phospho-D-ribosyl)imidazole from N(2)-formyl-N(1)-(5-phospho-D-ribosyl)glycinamide: step 2/2. The polypeptide is Phosphoribosylformylglycinamidine cyclo-ligase (Escherichia coli O6:K15:H31 (strain 536 / UPEC)).